The following is a 254-amino-acid chain: uncharacterized protein (254 aa).

The interval 60–161 (PKSPTTTSIS…PEIPQAAPGT (102 aa)) is disordered. Low complexity-rich tracts occupy residues 63–77 (PTTTSISTSTVSTTP) and 89–146 (TPIP…TTTS).

This is an uncharacterized protein from Caenorhabditis elegans.